Consider the following 637-residue polypeptide: Sterol 3-beta-glucosyltransferase UGT80A2 (637 aa).

Disordered regions lie at residues 1 to 29 and 66 to 112; these read MPEI…RASV and VAES…TERQ. Low complexity predominate over residues 13–24; it reads SSSSSSSSSSSS. Residues 67–79 show a composition bias toward polar residues; the sequence is AESSGTGNKSFSR. Basic and acidic residues predominate over residues 103-112; that stretch reads RLDKSKTERQ.

It belongs to the glycosyltransferase 28 family. Expressed in roots, cauline leaf epidermal cells, stomata, stamen, pollen and around the base of siliques.

It catalyses the reaction a sterol + UDP-alpha-D-glucose = a sterol 3-beta-D-glucoside + UDP + H(+). Functionally, involved in the biosynthesis of sterol glucosides. Catalyzes the synthesis of steryl glycosides (SGs) and acyl steryl glycosides (ASGs) which are the most abundant sterol derivatives in higher plants. Can act on several sterols like sitosterol, campesterol and stigmasterol. Both UGT80A2 and UGT80B1 are required for the normal production of SGs and ASGs in seeds. This chain is Sterol 3-beta-glucosyltransferase UGT80A2 (UGT80A2), found in Arabidopsis thaliana (Mouse-ear cress).